The primary structure comprises 296 residues: NAD kinase (296 aa).

Catalysis depends on Asp73, which acts as the Proton acceptor. NAD(+) contacts are provided by residues Asp73–Gly74, Lys78, Asn151–Glu152, Arg178, Asp180, and Thr191–Ser196.

The protein belongs to the NAD kinase family. A divalent metal cation serves as cofactor.

The protein localises to the cytoplasm. It catalyses the reaction NAD(+) + ATP = ADP + NADP(+) + H(+). Functionally, involved in the regulation of the intracellular balance of NAD and NADP, and is a key enzyme in the biosynthesis of NADP. Catalyzes specifically the phosphorylation on 2'-hydroxyl of the adenosine moiety of NAD to yield NADP. The protein is NAD kinase of Francisella tularensis subsp. mediasiatica (strain FSC147).